The primary structure comprises 260 residues: Cytochrome c oxidase subunit 2 (260 aa).

Topologically, residues 1–43 are mitochondrial intermembrane; it reads MILRLLECRFFTIALCDAAEPWQLGFQDAATPMMQGIIDLHHD. A helical transmembrane segment spans residues 44 to 64; it reads IFFFLILILVFVLWMLVRALW. At 65-84 the chain is on the mitochondrial matrix side; sequence HFNEQTNPIPQRIVHGTTIE. Residues 85–105 traverse the membrane as a helical segment; sequence IIWTIFPSVILLFIAIPSFAL. At 106 to 260 the chain is on the mitochondrial intermembrane side; sequence LYSMDGVLVD…VSNQLILQTN (155 aa). H189, C224, E226, C228, H232, and M235 together coordinate Cu cation. E226 contributes to the Mg(2+) binding site.

It belongs to the cytochrome c oxidase subunit 2 family. In terms of assembly, component of the cytochrome c oxidase (complex IV, CIV), a multisubunit enzyme composed of a catalytic core of 3 subunits and several supernumerary subunits. The complex exists as a monomer or a dimer and forms supercomplexes (SCs) in the inner mitochondrial membrane with ubiquinol-cytochrome c oxidoreductase (cytochrome b-c1 complex, complex III, CIII). Cu cation serves as cofactor.

The protein resides in the mitochondrion inner membrane. It catalyses the reaction 4 Fe(II)-[cytochrome c] + O2 + 8 H(+)(in) = 4 Fe(III)-[cytochrome c] + 2 H2O + 4 H(+)(out). Functionally, component of the cytochrome c oxidase, the last enzyme in the mitochondrial electron transport chain which drives oxidative phosphorylation. The respiratory chain contains 3 multisubunit complexes succinate dehydrogenase (complex II, CII), ubiquinol-cytochrome c oxidoreductase (cytochrome b-c1 complex, complex III, CIII) and cytochrome c oxidase (complex IV, CIV), that cooperate to transfer electrons derived from NADH and succinate to molecular oxygen, creating an electrochemical gradient over the inner membrane that drives transmembrane transport and the ATP synthase. Cytochrome c oxidase is the component of the respiratory chain that catalyzes the reduction of oxygen to water. Electrons originating from reduced cytochrome c in the intermembrane space (IMS) are transferred via the dinuclear copper A center (CU(A)) of subunit 2 and heme A of subunit 1 to the active site in subunit 1, a binuclear center (BNC) formed by heme A3 and copper B (CU(B)). The BNC reduces molecular oxygen to 2 water molecules using 4 electrons from cytochrome c in the IMS and 4 protons from the mitochondrial matrix. The chain is Cytochrome c oxidase subunit 2 (COX2) from Zea mays (Maize).